Here is a 251-residue protein sequence, read N- to C-terminus: CDP-diacylglycerol pyrophosphatase (251 aa).

A helical membrane pass occupies residues 5-25 (GYFLLAVIVIVAAAGVGYWKF).

This sequence belongs to the Cdh family.

Its subcellular location is the cell inner membrane. The enzyme catalyses a CDP-1,2-diacyl-sn-glycerol + H2O = a 1,2-diacyl-sn-glycero-3-phosphate + CMP + 2 H(+). It participates in phospholipid metabolism; CDP-diacylglycerol degradation; phosphatidate from CDP-diacylglycerol: step 1/1. This is CDP-diacylglycerol pyrophosphatase from Salmonella enteritidis PT4 (strain P125109).